A 292-amino-acid polypeptide reads, in one-letter code: Tricin synthase 2 (292 aa).

The tract at residues 21–46 (RTTPASRVSSTAMAAANGDASHGANG) is disordered. Positions 23–32 (TPASRVSSTA) are enriched in polar residues. S-adenosyl-L-methionine contacts are provided by residues S108, E130, 132-133 (GV), S138, D156, and A185. Residue D208 participates in a divalent metal cation binding. An S-adenosyl-L-methionine-binding site is contributed by D210. A divalent metal cation is bound by residues D234 and N235.

The protein belongs to the class I-like SAM-binding methyltransferase superfamily. Cation-dependent O-methyltransferase family. CCoAMT subfamily. The cofactor is Mg(2+). It depends on Mn(2+) as a cofactor. In terms of tissue distribution, expressed in stems only.

The enzyme catalyses tricetin + 2 S-adenosyl-L-methionine = 3',5'-di-O-methyltricetin + 2 S-adenosyl-L-homocysteine + 2 H(+). Catalyzes the stepwise methylation of tricetin to its 3'-mono- and 3',5'-dimethyl ethers. No 3',4',5'-trimethylated ester derivatives are produced. Can use caffeoyl CoA, 5-hydroxyferulic acid, luteolin, tricetin, quercetin, myrcetin and 7,8-dihydroxyflavone as substrates, but not naringenin, apigenin or kaempferol. The 2,3-double bond and the O-dihydroxyl group of the substrate are both required for catalytic activity of the enzyme. The chain is Tricin synthase 2 (ROMT-17) from Oryza sativa subsp. japonica (Rice).